The following is a 275-amino-acid chain: Large ribosomal subunit protein uL2c (275 aa).

A disordered region spans residues 224–263; sequence VMNPVDHPHGGGEGRAPIGRKRPLTPWGRPALGKKSRKNH.

It belongs to the universal ribosomal protein uL2 family. In terms of assembly, part of the 50S ribosomal subunit.

The protein resides in the plastid. The protein localises to the chloroplast. The sequence is that of Large ribosomal subunit protein uL2c (rpl2) from Chaetosphaeridium globosum (Charophycean green alga).